The sequence spans 391 residues: 3-ketoacyl-CoA thiolase (391 aa).

The active-site Acyl-thioester intermediate is Cys95. Residues His347 and Cys377 each act as proton acceptor in the active site.

Belongs to the thiolase-like superfamily. Thiolase family. As to quaternary structure, heterotetramer of two alpha chains (FadB) and two beta chains (FadA).

Its subcellular location is the cytoplasm. It catalyses the reaction an acyl-CoA + acetyl-CoA = a 3-oxoacyl-CoA + CoA. The protein operates within lipid metabolism; fatty acid beta-oxidation. Its function is as follows. Catalyzes the final step of fatty acid oxidation in which acetyl-CoA is released and the CoA ester of a fatty acid two carbons shorter is formed. In Pseudomonas fluorescens (strain Pf0-1), this protein is 3-ketoacyl-CoA thiolase.